The primary structure comprises 54 residues: Metallothionein-4 (54 aa).

It belongs to the metallothionein superfamily. Type 11 family.

The sequence is that of Metallothionein-4 (MTP4) from Yarrowia lipolytica (strain CLIB 122 / E 150) (Yeast).